A 732-amino-acid polypeptide reads, in one-letter code: Coagulation factor XIII A chain (732 aa).

Residues 1–26 form a disordered region; it reads MSDTPASTFGGRRAVPPNNSNAAEVD. Residue Ser2 is modified to N-acetylserine. Residues 2–38 constitute a propeptide, activation peptide; sequence SDTPASTFGGRRAVPPNNSNAAEVDLPTEELQGLVPR. Residues Cys315, His374, and Asp397 contribute to the active site. 4 residues coordinate Ca(2+): Asn437, Asp439, Glu486, and Glu491. Asn614 carries an N-linked (GlcNAc...) asparagine glycan.

Belongs to the transglutaminase superfamily. Transglutaminase family. Tetramer of two A chains (F13A1) and two B (F13B) chains. Requires Ca(2+) as cofactor. In terms of processing, the activation peptide is released by thrombin.

It is found in the cytoplasm. It localises to the secreted. It carries out the reaction L-glutaminyl-[protein] + L-lysyl-[protein] = [protein]-L-lysyl-N(6)-5-L-glutamyl-[protein] + NH4(+). In terms of biological role, factor XIII is activated by thrombin and calcium ion to a transglutaminase that catalyzes the formation of gamma-glutamyl-epsilon-lysine cross-links between fibrin chains, thus stabilizing the fibrin clot. Also cross-link alpha-2-plasmin inhibitor, or fibronectin, to the alpha chains of fibrin. The protein is Coagulation factor XIII A chain (F13a1) of Mus musculus (Mouse).